A 410-amino-acid polypeptide reads, in one-letter code: Pectate lyase PEL9 (410 aa).

The signal sequence occupies residues Met-1–Ala-18. Residues Asp-191, Asp-215, Asp-216, and Asp-219 each coordinate Ca(2+). Asn-234 carries N-linked (GlcNAc...) asparagine glycosylation. Lys-271 functions as the Proton acceptor in the catalytic mechanism. Residues Gly-342–Glu-351 show a composition bias toward polar residues. 2 disordered regions span residues Gly-342–Gly-361 and Glu-381–Ala-410.

Belongs to the polysaccharide lyase 9 family. Ca(2+) is required as a cofactor.

The protein resides in the secreted. The catalysed reaction is Eliminative cleavage of (1-&gt;4)-alpha-D-galacturonan to give oligosaccharides with 4-deoxy-alpha-D-galact-4-enuronosyl groups at their non-reducing ends.. With respect to regulation, inhibited by iron ions. Activated in presence of the surfactant polysorbate 20, while inhibited in the presence of Triton X-100 and sodium dodecyl sulfate. Inhibited in presence of the organic solvents methanol, ethanol, propan-2-ol and acetone. In terms of biological role, presents an endo-cleaving activity on the homogalacturonan (HG) region in pectin. Active on homogalacturonan with a degree of polymerization above 4, and does not appear to be affected by the degree of methylation of the substrate. Does not degrade linear rhamnogalacturonan. In Emericella nidulans (strain FGSC A4 / ATCC 38163 / CBS 112.46 / NRRL 194 / M139) (Aspergillus nidulans), this protein is Pectate lyase PEL9.